A 672-amino-acid chain; its full sequence is DNA ligase (672 aa).

NAD(+) is bound by residues 34-38, 83-84, and Glu-113; these read DSVYD and SL. Lys-115 functions as the N6-AMP-lysine intermediate in the catalytic mechanism. NAD(+)-binding residues include Arg-136, Glu-170, Lys-286, and Lys-310. Residues Cys-404, Cys-407, Cys-422, and Cys-427 each coordinate Zn(2+). The region spanning 592–672 is the BRCT domain; it reads STDSSFNGLR…EFIQQMEEES (81 aa).

Belongs to the NAD-dependent DNA ligase family. LigA subfamily. The cofactor is Mg(2+). Requires Mn(2+) as cofactor.

The catalysed reaction is NAD(+) + (deoxyribonucleotide)n-3'-hydroxyl + 5'-phospho-(deoxyribonucleotide)m = (deoxyribonucleotide)n+m + AMP + beta-nicotinamide D-nucleotide.. DNA ligase that catalyzes the formation of phosphodiester linkages between 5'-phosphoryl and 3'-hydroxyl groups in double-stranded DNA using NAD as a coenzyme and as the energy source for the reaction. It is essential for DNA replication and repair of damaged DNA. This Ligilactobacillus salivarius (strain UCC118) (Lactobacillus salivarius) protein is DNA ligase.